A 434-amino-acid polypeptide reads, in one-letter code: D-amino acid dehydrogenase (434 aa).

3-17 is a binding site for FAD; the sequence is VVILGSGVVGVASAW.

The protein belongs to the DadA oxidoreductase family. It depends on FAD as a cofactor.

The catalysed reaction is a D-alpha-amino acid + A + H2O = a 2-oxocarboxylate + AH2 + NH4(+). It participates in amino-acid degradation; D-alanine degradation; NH(3) and pyruvate from D-alanine: step 1/1. Its function is as follows. Oxidative deamination of D-amino acids. The chain is D-amino acid dehydrogenase from Yersinia enterocolitica serotype O:8 / biotype 1B (strain NCTC 13174 / 8081).